The sequence spans 997 residues: Sorting nexin-19 (997 aa).

Residues 95 to 273 form the PXA domain; it reads ERQLEQEINR…ILVSIFSKYR (179 aa). 2 disordered regions span residues 313–333 and 413–437; these read SSPA…SPEI and GALE…APGT. The segment covering 422–435 has biased composition (acidic residues); the sequence is GSECMEGAEAEEAP. The PX domain occupies 538 to 668; sequence LRITGTITAR…EFLALNTDAR (131 aa). The a 1,2-diacyl-sn-glycero-3-phospho-(1D-myo-inositol-3-phosphate) site is built by R587 and R634. A disordered region spans residues 697–728; the sequence is FPRSEPQSPTEELSEAENESKPQTEGKKASKS. The segment covering 714-724 has biased composition (basic and acidic residues); that stretch reads NESKPQTEGKK.

The protein belongs to the sorting nexin family. In terms of assembly, interacts with PTPRN.

The protein resides in the early endosome membrane. It localises to the cytoplasmic vesicle membrane. Functionally, plays a role in intracellular vesicle trafficking and exocytosis. May play a role in maintaining insulin-containing dense core vesicles in pancreatic beta-cells and in preventing their degradation. May play a role in insulin secretion. Interacts with membranes containing phosphatidylinositol 3-phosphate (PtdIns(3P)). The polypeptide is Sorting nexin-19 (Mus musculus (Mouse)).